Consider the following 543-residue polypeptide: MASFFDDDQPSNLTEFSVSELSGSIKRTIETAFDQVRVRGEISGFRGQHSSGHAYFSLKDDKARIDAVIWKGSFSKLKYRPEEGMEVIATGRITTFPGSSKYQIVIEQMEPAGAGALMALIEERKRRFTAEGLFDPATKQLLPFMPKVIGVVTSPTGAVIRDILHRISDRFPVHVLVWPVKVQGEGSGDEVANAINGFNAFQPDGVIPRPDVLIVARGGGSLEDLWSFNDEAVVRAAAASAIPLISAVGHETDWTLIDYAADVRAPTPTGAAEMAVPVKADLEAQLAGLAARLAGAVNRQMDHRRQNLRALARALPSLDQLLALPRRRFDEAASGLGRSLELNTMTKRQSFERAAAKLSPDMLVRRLVERRQRVSERAALSDRIIERLIERQKANLGRIDATLTAVPARLKAQTGRSRDRLDSFSRRADSAVINDLRRARSTVSAHDRMLQSLSYKNVLMRGYAVIRGQDDRPLSRAAGLEDGRAIAIEFADGRVSAVTGEGDKASPPPQAASATTTPAPGRPNPLPKSPKKSEPPAGQGSLF.

The tract at residues 498–543 (VTGEGDKASPPPQAASATTTPAPGRPNPLPKSPKKSEPPAGQGSLF) is disordered.

The protein belongs to the XseA family. In terms of assembly, heterooligomer composed of large and small subunits.

The protein localises to the cytoplasm. The catalysed reaction is Exonucleolytic cleavage in either 5'- to 3'- or 3'- to 5'-direction to yield nucleoside 5'-phosphates.. Bidirectionally degrades single-stranded DNA into large acid-insoluble oligonucleotides, which are then degraded further into small acid-soluble oligonucleotides. This Allorhizobium ampelinum (strain ATCC BAA-846 / DSM 112012 / S4) (Agrobacterium vitis (strain S4)) protein is Exodeoxyribonuclease 7 large subunit.